A 782-amino-acid polypeptide reads, in one-letter code: MVDSESQNDFANDGDNDSYFVSTQFESKQEEIMEKELQKLQTGQTVSQLLRFRSGISGLTSVTPKPVKVSRPGLRKTGSRKSKKNQSMSAMVKERFKTDKYAYFSGDQRKIDEFLRRLEGSEDIENMAMSTSGKDGSCLFTRDEWICIVQSIKLRFPELSTTKKKSLSAITRQINKQEKENEDENSIWSQARSLPSLELTDEDLKWLYDLDDEQMANRTITSSMTEVDGNDDHSPFVMTLSQTTPSQLSHIKESDSLYSQETNVQTTEPADHQSGHMQRCHSQTAEGKTQSKILEIEIVSDSEEEIESLIRNTEPDSSEDVYGANEVSSHQVPAVDALASFQSFPFAADMIPRNNVRDKEHESLHISSSIRSSPAQSLTQSQVPSSIDSIIEPPCESPRKMSPIRDTQPEPVITSPFKTPTKKSKELLSKYSSPVKNSIHNNMGSPVAMMVPRSSESAKHVEEIIVSSDEESVYSTAKSVFPSAQIVISEVEDEDEEFYEIVSSIPEKHKPTAAAKKRKLLQTSRYEVVSNFNINDYDDDQRGFKLRKLETKPIIIDSDNEIADSEEDEKNLSIIEITREVEAEESEHDTEYLINLGKQVEGNSKMNTSVLQVPSSPSSITFGRTDILKELEAFSNSDLDTDRTINSNTSKNSNAIKSGTNQTIDFTLLSTKELQERFKKWELKPVQGRQRMVSVLSEVSKLFTNSFNDPVPETRQGFEGTVYGSLNRLVGSNQYWHEKIISFEPLRVSELRDWICTKGYELEEDFLMRYCDDNGYCCTRQP.

Disordered regions lie at residues 63 to 91 (TPKP…MSAM) and 359 to 425 (KEHE…KKSK). A compositionally biased stretch (basic residues) spans 73 to 84 (GLRKTGSRKSKK). Residues 374 to 388 (PAQSLTQSQVPSSID) are compositionally biased toward polar residues.

This sequence belongs to the SLX4 family. As to quaternary structure, forms a heterodimer with SLX1. Post-translationally, phosphorylated in response to DNA damage.

The protein localises to the nucleus. Its function is as follows. Regulatory subunit of the SLX1-SLX4 structure-specific endonuclease that resolves DNA secondary structures generated during DNA repair and recombination. Has endonuclease activity towards branched DNA substrates, introducing single-strand cuts in duplex DNA close to junctions with ss-DNA. The chain is Structure-specific endonuclease subunit SLX4 from Scheffersomyces stipitis (strain ATCC 58785 / CBS 6054 / NBRC 10063 / NRRL Y-11545) (Yeast).